A 491-amino-acid polypeptide reads, in one-letter code: Immediate early protein IE1 (491 aa).

The span at 1–11 (MESSAKRKMDP) shows a compositional bias: basic and acidic residues. The segment at 1-24 (MESSAKRKMDPDNPDEGPSSKVPR) is nuclear localization signal. The disordered stretch occupies residues 1-30 (MESSAKRKMDPDNPDEGPSSKVPRPETPVT). The interaction with host PML, interference with PML sumoylation and disruption of PML-associated nuclear bodies stretch occupies residues 132-346 (ILDKVHEPFE…SVMKRRIEEI (215 aa)). Residues 373–445 (AIAEESDEEE…EEGAQEERED (73 aa)) are interaction with host STAT2. The modulation of STAT3/STAT1 signaling stretch occupies residues 410-420 (ATIPLSSVIVA). Residues 410-445 (ATIPLSSVIVAENSDQEESEQSDEEEEEGAQEERED) form an interaction with host STAT3 region. The tract at residues 421 to 472 (ENSDQEESEQSDEEEEEGAQEEREDTVSVKSEPVSEIEEVAPEEEEDGAEEP) is acidic. Positions 421–491 (ENSDQEESEQ…PMVTRSKADQ (71 aa)) are disordered. The segment covering 423–444 (SDQEESEQSDEEEEEGAQEERE) has biased composition (acidic residues). Residues 449–452 (VKSE) are interaction with host SUMO1. A Glycyl lysine isopeptide (Lys-Gly) (interchain with G-Cter in SUMO) cross-link involves residue lysine 450. Residues 455–470 (SEIEEVAPEEEEDGAE) are compositionally biased toward acidic residues. Positions 475 to 491 (SGGKSTHPMVTRSKADQ) are chromosome-tethering domain (CTD), binding to histones.

Belongs to the HHV-5 IE1 protein family. As to quaternary structure, forms homodimers. Interacts with human p53/TP53; this interaction inhibits p53/TP53-dependent transactivation activity. Interacts with host STAT1. Interacts with host STAT2; this interaction promotes viral growth and counteracts the antiviral interferon response. May also interact with the host STAT1-STAT2 heterodimer. Interacts with host STAT3; this interaction leads to STAT3 nuclear accumulation and disruption of IL6-induced STAT3 phosphorylation. Interacts with host PML; this interaction inhibits host PML de novo sumoylation and probably inhibits PML regulation of type I and type II interferon-induced gene expression. Interacts with host DAXX. Interacts with host SP100. Interacts with host E2F1. Interacts with host RB1. Interacts with host HDAC1; this interaction inhibits histone deacetylation and promotes viral transcription. Interacts with host HDAC2; this interaction inhibits histone deacetylation and promotes viral transcription. Interacts with host HDAC3; this interaction inhibits histone deacetylation and promotes viral transcription. Interacts with host PLSCR1; this interaction inhibits IE1 transactivating activity. In terms of processing, sumoylated by host PML/nuclear domain 10. Sumoylation abolishes the interaction with host STAT2 and thus the IE1-mediated repression of interferon-stimulated genes.

It localises to the host nucleus. Functionally, plays an important role in transactivating viral early genes as well as activating its own promoter, probably by altering the viral chromatin structure. Expression of IE1 and IE2 proteins is critical for the establishment of lytic infection and reactivation from viral latency. Disrupts PML-associated ND10 nuclear bodies by interfering with host PML and SP100 sumoylation thereby altering the regulation of type I and type II interferon-induced gene expression. Promotes efficient viral growth by interacting with and directing host SP100 to degradation, leading to enhanced acetylation level of histones. In addition, functions in counteracting the host innate antiviral response. Inhibits the type I interferon pathway by directly interacting with and sequestrating host STAT2. Also targets type II interferon pathway by repressing IL6- and STAT3 target genes. Repression of STAT3 genes is due to STAT3 nuclear accumulation and disruption of IL6-induced STAT3 phosphorylation by IE1. This repression is followed by phosphorylation and activation of STAT1. Inhibits host ISG transcription by sequestering host ISGF3 in a PML- and STAT2- binding dependent manner. Alters host cell cycle progression, probably through its interaction with host E2F1 or RB1 that overcomes the RB1-mediated repression of E2F-responsive promoters. May act as a E3 ubiquitin ligase targeting several host proteins including HES1 and SP100A for ubiquitination and subsequent proteasomal degradation. Impairs the radial migration of immature neurons by downregulating Gap junction alpha-1 protein/GJA1 also via ubiquitination and degradation. This Human cytomegalovirus (strain Towne) (HHV-5) protein is Immediate early protein IE1 (UL123).